Reading from the N-terminus, the 196-residue chain is ATP-dependent Clp protease proteolytic subunit (196 aa).

The active-site Nucleophile is serine 96. Histidine 121 is an active-site residue.

This sequence belongs to the peptidase S14 family. In terms of assembly, fourteen ClpP subunits assemble into 2 heptameric rings which stack back to back to give a disk-like structure with a central cavity, resembling the structure of eukaryotic proteasomes.

It localises to the cytoplasm. The enzyme catalyses Hydrolysis of proteins to small peptides in the presence of ATP and magnesium. alpha-casein is the usual test substrate. In the absence of ATP, only oligopeptides shorter than five residues are hydrolyzed (such as succinyl-Leu-Tyr-|-NHMec, and Leu-Tyr-Leu-|-Tyr-Trp, in which cleavage of the -Tyr-|-Leu- and -Tyr-|-Trp bonds also occurs).. Its function is as follows. Cleaves peptides in various proteins in a process that requires ATP hydrolysis. Has a chymotrypsin-like activity. Plays a major role in the degradation of misfolded proteins. This Streptococcus mutans serotype c (strain ATCC 700610 / UA159) protein is ATP-dependent Clp protease proteolytic subunit.